Here is a 553-residue protein sequence, read N- to C-terminus: Arginine--tRNA ligase (553 aa).

A 'HIGH' region motif is present at residues 123 to 133 (ANPTGPLTIGR).

This sequence belongs to the class-I aminoacyl-tRNA synthetase family. As to quaternary structure, monomer.

Its subcellular location is the cytoplasm. The enzyme catalyses tRNA(Arg) + L-arginine + ATP = L-arginyl-tRNA(Arg) + AMP + diphosphate. The polypeptide is Arginine--tRNA ligase (Chlorobium phaeobacteroides (strain BS1)).